A 265-amino-acid polypeptide reads, in one-letter code: tRNA (guanine-N(7)-)-methyltransferase (265 aa).

Basic and acidic residues predominate over residues 1–16 (MNHDDPNASGVPHDDA). Residues 1-40 (MNHDDPNASGVPHDDANDAAPASASDAARATGHADDESSP) are disordered. Residues 18–31 (DAAPASASDAARAT) show a composition bias toward low complexity. Positions 95, 120, 147, and 170 each coordinate S-adenosyl-L-methionine. Residue Asp-170 is part of the active site. Residues Lys-174, Asp-206, and 241–244 (TKFE) contribute to the substrate site.

It belongs to the class I-like SAM-binding methyltransferase superfamily. TrmB family.

The enzyme catalyses guanosine(46) in tRNA + S-adenosyl-L-methionine = N(7)-methylguanosine(46) in tRNA + S-adenosyl-L-homocysteine. It participates in tRNA modification; N(7)-methylguanine-tRNA biosynthesis. In terms of biological role, catalyzes the formation of N(7)-methylguanine at position 46 (m7G46) in tRNA. The protein is tRNA (guanine-N(7)-)-methyltransferase of Burkholderia thailandensis (strain ATCC 700388 / DSM 13276 / CCUG 48851 / CIP 106301 / E264).